A 176-amino-acid chain; its full sequence is MYLVLLIAIILFITIILVIFLISGLFYPEQNPLLPISPPKKKCKIDVDCKDNGHHCVGGFCTKMNCLEAAKYDIKGIKLDPNIRSCNYTPKFYKFSSTADPQSPFGKSRIEYGELYDPHSGEEFCESLCANYPGCISWEYDQISGKTTGNCYFYRNPHPALKYKSDAVMAIPRKVL.

Met1 is a topological domain (intravirion). Residues 2-22 (YLVLLIAIILFITIILVIFLI) traverse the membrane as a helical segment. Residues 23–176 (SGLFYPEQNP…AVMAIPRKVL (154 aa)) are Virion surface-facing.

This sequence belongs to the asfivirus envelope protein p22 family.

Its subcellular location is the virion membrane. The protein resides in the host cell membrane. This chain is Envelope protein 167, found in African swine fever virus (isolate Warthog/Namibia/Wart80/1980) (ASFV).